The chain runs to 938 residues: Protein SEY1 (938 aa).

Residues 1–159 form a disordered region; that stretch reads MTSQSHGAPP…QKSAKSTPGS (159 aa). Residues 1–839 are Cytoplasmic-facing; it reads MTSQSHGAPP…KRSTIQSTTQ (839 aa). Residues 33-45 show a composition bias toward low complexity; it reads SVSSSHSSHSPVT. The span at 74–94 shows a compositional bias: pro residues; that stretch reads IAAPEPIAAPEPIPAPEPIAA. Basic and acidic residues predominate over residues 100-118; sequence LKSEHKPVEREHKPVERKP. Residues 146–158 are compositionally biased toward polar residues; it reads VPTSQKSAKSTPG. The 232-residue stretch at 192 to 423 folds into the GB1/RHD3-type G domain; it reads GLDYHVVAVF…DPNYVFKPVY (232 aa). 202 to 209 lines the GTP pocket; that stretch reads GSQSTGKS. Positions 603–630 form a coiled coil; that stretch reads SYDDTLAALEQELDTLRDHKSKVEIDRL. Residues 840–860 form a helical membrane-spanning segment; it reads IPLYMYGLLLLLGWNEIMAVL. Residues 861-863 are Lumenal-facing; the sequence is RSP. A helical membrane pass occupies residues 864 to 884; that stretch reads VYFMFLLVAAGAAYVIHTLHL. Residues 885–938 are Cytoplasmic-facing; it reads WGPLTHMTNTMIAEATDMAKAKLKQVLNEAPTGETREREAPVGSSRDDVELKDL. Residues 911-938 form a disordered region; the sequence is LNEAPTGETREREAPVGSSRDDVELKDL. The segment covering 918-938 has biased composition (basic and acidic residues); sequence ETREREAPVGSSRDDVELKDL.

This sequence belongs to the TRAFAC class dynamin-like GTPase superfamily. GB1/RHD3 GTPase family. RHD3 subfamily.

The protein localises to the endoplasmic reticulum membrane. In terms of biological role, cooperates with the reticulon proteins and tubule-shaping DP1 family proteins to generate and maintain the structure of the tubular endoplasmic reticulum network. Has GTPase activity, which is required for its function in ER organization. This Yarrowia lipolytica (strain CLIB 122 / E 150) (Yeast) protein is Protein SEY1.